We begin with the raw amino-acid sequence, 368 residues long: Cobalt-precorrin-5B C(1)-methyltransferase (368 aa).

It belongs to the CbiD family.

It carries out the reaction Co-precorrin-5B + S-adenosyl-L-methionine = Co-precorrin-6A + S-adenosyl-L-homocysteine. It participates in cofactor biosynthesis; adenosylcobalamin biosynthesis; cob(II)yrinate a,c-diamide from sirohydrochlorin (anaerobic route): step 6/10. In terms of biological role, catalyzes the methylation of C-1 in cobalt-precorrin-5B to form cobalt-precorrin-6A. In Brucella canis (strain ATCC 23365 / NCTC 10854 / RM-666), this protein is Cobalt-precorrin-5B C(1)-methyltransferase.